We begin with the raw amino-acid sequence, 139 residues long: Asp-hemolysin (139 aa).

The propeptide occupies methionine 1–glutamine 5. The segment at threonine 47–glycine 79 is disordered. A compositionally biased stretch (polar residues) spans valine 62 to glycine 75.

It belongs to the aegerolysin family.

This Aspergillus fumigatus (strain ATCC MYA-4609 / CBS 101355 / FGSC A1100 / Af293) (Neosartorya fumigata) protein is Asp-hemolysin.